A 127-amino-acid chain; its full sequence is Cyclin-dependent kinase 2-associated protein 2 (127 aa).

The interval M1 to P47 is disordered. Over residues A9 to P44 the composition is skewed to low complexity. The tract at residues P65 to I107 is interaction with CDK2.

Belongs to the CDK2AP family. Component of the nucleosome remodeling and deacetylase (NuRD) repressor complex, composed of core proteins MTA1, MTA2, MTA3, RBBP4, RBBP7, HDAC1, HDAC2, MBD2, MBD3, and peripherally associated proteins CDK2AP1, CDK2AP2, GATAD2A, GATAD2B, CHD3, CHD4 and CHD5. The exact stoichiometry of the NuRD complex is unknown, and some subunits such as MBD2 and MBD3, GATAD2A and GATAD2B, and CHD3, CHD4 and CHD5 define mutually exclusive NuRD complexes. Interacts with CDK2AP1. Interacts with CDK2. Interacts with MAPK1. In terms of processing, phosphorylated by MAPK1 and CDK2. As to expression, oocytes (at protein level).

It localises to the cytoplasm. It is found in the nucleus. Functionally, acts as a component of the histone deacetylase NuRD complex which participates in the remodeling of chromatin. Inhibits cell cycle G1/S phase transition by repressing CDK2 expression and activation; represses CDK2 activation by inhibiting its interaction with cyclin E and A. Plays a role in regulating the self-renewal of embryonic stem cells (ESCs) and in maintaining cell survival during terminal differentiation of ESCs. Regulates microtubule organization of metaphase II oocytes. This is Cyclin-dependent kinase 2-associated protein 2 (Cdk2ap2) from Mus musculus (Mouse).